A 561-amino-acid chain; its full sequence is Mercuric reductase (561 aa).

One can recognise an HMA domain in the interval 1-65 (MTTLKITGMT…AVAGLGYEAT (65 aa)). A metal cation-binding residues include Cys11 and Cys14. FAD contacts are provided by Ala110, Gly130, and Thr135. A disulfide bridge connects residues Cys136 and Cys141. 4 residues coordinate FAD: Lys145, Ala211, Asp403, and Val411. Residues Cys558 and Cys559 each coordinate Hg(2+).

This sequence belongs to the class-I pyridine nucleotide-disulfide oxidoreductase family. Homodimer. It depends on FAD as a cofactor.

The catalysed reaction is Hg + NADP(+) + H(+) = Hg(2+) + NADPH. Its function is as follows. Resistance to Hg(2+) in bacteria appears to be governed by a specialized system which includes mercuric reductase. MerA protein is responsible for volatilizing mercury as Hg(0). The protein is Mercuric reductase (merA) of Enterobacter agglomerans (Erwinia herbicola).